An 899-amino-acid chain; its full sequence is ATP-dependent DNA helicase DDX31 (899 aa).

Basic residues-rich tracts occupy residues 1–12 (MNKHDQKKKRNK) and 21–31 (KKSKGFIKNKK). Positions 1–142 (MNKHDQKKKR…SKHKRNVPSK (142 aa)) are disordered. Acidic residues predominate over residues 76–85 (NMNDDDDNNM). A compositionally biased stretch (low complexity) spans 86 to 102 (NDDYNNNNIKGDYNNNN). Over residues 106 to 121 (DDVDDDDYDDDDDDNF) the composition is skewed to acidic residues. The short motif at 173 to 201 (FCDLKYILSESLINTLEKNEFIKMTSIQK) is the Q motif element. The region spanning 204–433 (IPLFFKPNDI…NYCLTNNTMW (230 aa)) is the Helicase ATP-binding domain. 217 to 224 (SMTGSGKT) lines the ATP pocket. Positions 332 to 335 (DEAD) match the DEAD box motif. Polar residues predominate over residues 463 to 472 (NRENSPLNIH). The disordered stretch occupies residues 463 to 517 (NRENSPLNIHNNDDNDDNDDNDENNGDNNNNNDDNNNNNDDNNNKNNDDDNNNTY). Acidic residues predominate over residues 476–487 (DNDDNDDNDENN). A compositionally biased stretch (low complexity) spans 488-503 (GDNNNNNDDNNNNNDD). Residues 593 to 782 (KITPVLERED…TIINHFKKFC (190 aa)) form the Helicase C-terminal domain.

It belongs to the DEAD box helicase family. DDX31/DBP7 subfamily.

The protein resides in the nucleus. The protein localises to the nucleolus. It catalyses the reaction ATP + H2O = ADP + phosphate + H(+). Functionally, has DNA helicase activity and may also have RNA helicase activity; the DNA helicase direction was not determined. Shows ssDNA and RNA dependent ATPase activity. In Plasmodium falciparum (isolate 3D7), this protein is ATP-dependent DNA helicase DDX31 (DDX31).